A 167-amino-acid chain; its full sequence is RNA pyrophosphohydrolase (167 aa).

A Nudix hydrolase domain is found at 8-159; that stretch reads PYRTCVGVML…KRPVYERVVK (152 aa). The Nudix box signature appears at 47–68; sequence GGVDPGEDTWAAAKRELYEETS.

Belongs to the Nudix hydrolase family. RppH subfamily. The cofactor is a divalent metal cation.

Its function is as follows. Accelerates the degradation of transcripts by removing pyrophosphate from the 5'-end of triphosphorylated RNA, leading to a more labile monophosphorylated state that can stimulate subsequent ribonuclease cleavage. The protein is RNA pyrophosphohydrolase of Bradyrhizobium diazoefficiens (strain JCM 10833 / BCRC 13528 / IAM 13628 / NBRC 14792 / USDA 110).